The sequence spans 570 residues: Putative ABC transporter ATP-binding protein SACOL2708 (570 aa).

ABC transporter domains lie at 6 to 247 (ISFK…GIRE) and 304 to 537 (LELN…ASLR). Residues 40–47 (GASGSGKS) and 338–345 (GHNGAGKS) each bind ATP.

Belongs to the ABC transporter superfamily.

The protein localises to the cell membrane. In terms of biological role, probably part of an ABC transporter complex. Responsible for energy coupling to the transport system. In Staphylococcus aureus (strain COL), this protein is Putative ABC transporter ATP-binding protein SACOL2708.